The chain runs to 384 residues: Succinyl-diaminopimelate desuccinylase (384 aa).

H73 contacts Zn(2+). D75 is a catalytic residue. D106 is a binding site for Zn(2+). E140 serves as the catalytic Proton acceptor. Positions 141, 169, and 358 each coordinate Zn(2+).

This sequence belongs to the peptidase M20A family. DapE subfamily. In terms of assembly, homodimer. Requires Zn(2+) as cofactor. The cofactor is Co(2+).

The enzyme catalyses N-succinyl-(2S,6S)-2,6-diaminopimelate + H2O = (2S,6S)-2,6-diaminopimelate + succinate. It functions in the pathway amino-acid biosynthesis; L-lysine biosynthesis via DAP pathway; LL-2,6-diaminopimelate from (S)-tetrahydrodipicolinate (succinylase route): step 3/3. Its function is as follows. Catalyzes the hydrolysis of N-succinyl-L,L-diaminopimelic acid (SDAP), forming succinate and LL-2,6-diaminopimelate (DAP), an intermediate involved in the bacterial biosynthesis of lysine and meso-diaminopimelic acid, an essential component of bacterial cell walls. The sequence is that of Succinyl-diaminopimelate desuccinylase from Pelagibacter ubique (strain HTCC1062).